A 526-amino-acid chain; its full sequence is 2-isopropylmalate synthase (526 aa).

In terms of domain architecture, Pyruvate carboxyltransferase spans 5–267 (VIIFDTTLRD…HTGIRHQEIY (263 aa)). Mn(2+) is bound by residues Asp14, His202, His204, and Asn238. The regulatory domain stretch occupies residues 393-526 (RLEYFSVQSG…VPSISTSSTH (134 aa)).

This sequence belongs to the alpha-IPM synthase/homocitrate synthase family. LeuA type 1 subfamily. As to quaternary structure, homodimer. Mn(2+) is required as a cofactor.

Its subcellular location is the cytoplasm. The catalysed reaction is 3-methyl-2-oxobutanoate + acetyl-CoA + H2O = (2S)-2-isopropylmalate + CoA + H(+). The protein operates within amino-acid biosynthesis; L-leucine biosynthesis; L-leucine from 3-methyl-2-oxobutanoate: step 1/4. Catalyzes the condensation of the acetyl group of acetyl-CoA with 3-methyl-2-oxobutanoate (2-ketoisovalerate) to form 3-carboxy-3-hydroxy-4-methylpentanoate (2-isopropylmalate). The protein is 2-isopropylmalate synthase of Edwardsiella ictaluri (strain 93-146).